The primary structure comprises 206 residues: Outer-membrane lipoprotein LolB (206 aa).

Residues 1–18 (MKTFKFFTALFATAILTA) form the signal peptide. Cysteine 19 is lipidated: N-palmitoyl cysteine. A lipid anchor (S-diacylglycerol cysteine) is attached at cysteine 19.

The protein belongs to the LolB family. Monomer.

Its subcellular location is the cell outer membrane. In terms of biological role, plays a critical role in the incorporation of lipoproteins in the outer membrane after they are released by the LolA protein. This chain is Outer-membrane lipoprotein LolB, found in Haemophilus influenzae (strain PittGG).